The chain runs to 116 residues: Putative membrane protein insertion efficiency factor (116 aa).

It belongs to the UPF0161 family.

Its subcellular location is the cell inner membrane. Its function is as follows. Could be involved in insertion of integral membrane proteins into the membrane. This is Putative membrane protein insertion efficiency factor from Bartonella tribocorum (strain CIP 105476 / IBS 506).